Here is a 307-residue protein sequence, read N- to C-terminus: D-alanine--D-alanine ligase (307 aa).

The ATP-grasp domain maps to 101 to 301 (RDVLAAAGVP…FGELVRWMVD (201 aa)). Residue 128-182 (LPPPYVIKPLGEGSSFGVFIVREDQAYPPQELTRSDWAFGNRVLVESYIGGRELT) coordinates ATP. Mg(2+) contacts are provided by Asp251, Glu268, and Asn270.

This sequence belongs to the D-alanine--D-alanine ligase family. Mg(2+) is required as a cofactor. Requires Mn(2+) as cofactor.

Its subcellular location is the cytoplasm. It catalyses the reaction 2 D-alanine + ATP = D-alanyl-D-alanine + ADP + phosphate + H(+). The protein operates within cell wall biogenesis; peptidoglycan biosynthesis. In terms of biological role, cell wall formation. The protein is D-alanine--D-alanine ligase of Beijerinckia indica subsp. indica (strain ATCC 9039 / DSM 1715 / NCIMB 8712).